Reading from the N-terminus, the 180-residue chain is ATP-dependent protease subunit HslV (180 aa).

The active site involves threonine 10. Na(+)-binding residues include glycine 165, cysteine 168, and threonine 171.

This sequence belongs to the peptidase T1B family. HslV subfamily. As to quaternary structure, a double ring-shaped homohexamer of HslV is capped on each side by a ring-shaped HslU homohexamer. The assembly of the HslU/HslV complex is dependent on binding of ATP.

Its subcellular location is the cytoplasm. The enzyme catalyses ATP-dependent cleavage of peptide bonds with broad specificity.. With respect to regulation, allosterically activated by HslU binding. Functionally, protease subunit of a proteasome-like degradation complex believed to be a general protein degrading machinery. The chain is ATP-dependent protease subunit HslV from Koribacter versatilis (strain Ellin345).